We begin with the raw amino-acid sequence, 221 residues long: 2-amino-5-formylamino-6-ribosylaminopyrimidin-4(3H)-one 5'-monophosphate deformylase (221 aa).

Residues Glu-29, His-31, Asp-40, and His-108 each contribute to the Fe cation site.

The protein belongs to the creatininase superfamily. FAPy deformylase family. Homodimer. Fe(2+) is required as a cofactor. It depends on Zn(2+) as a cofactor.

The enzyme catalyses 2-amino-5-formylamino-6-(5-phospho-D-ribosylamino)pyrimidin-4(3H)-one + H2O = 2,5-diamino-6-(1-D-ribosylamino)pyrimidin-4(3H)-one 5'-phosphate + formate + H(+). Its pathway is cofactor biosynthesis; coenzyme F420 biosynthesis. It participates in cofactor biosynthesis; riboflavin biosynthesis. Catalyzes the hydrolysis of the formamide of 2-amino-5-formylamino-6-ribosylamino-4(3H)-pyrimidinone 5'-monophosphate (FAPy) to form 2,5-diamino-6-ribosylamino-4(3H)-pyrimidinone 5'-phosphate (APy). The protein is 2-amino-5-formylamino-6-ribosylaminopyrimidin-4(3H)-one 5'-monophosphate deformylase of Methanococcus maripaludis (strain C5 / ATCC BAA-1333).